A 629-amino-acid chain; its full sequence is tRNA uridine 5-carboxymethylaminomethyl modification enzyme MnmG (629 aa).

FAD is bound by residues 14–19, Val-126, and Ser-181; that span reads GAGHAG. 273–287 is an NAD(+) binding site; that stretch reads GPRYCPSIEDKVVRF. Residue Gln-370 participates in FAD binding.

This sequence belongs to the MnmG family. Homodimer. Heterotetramer of two MnmE and two MnmG subunits. It depends on FAD as a cofactor.

It localises to the cytoplasm. In terms of biological role, NAD-binding protein involved in the addition of a carboxymethylaminomethyl (cmnm) group at the wobble position (U34) of certain tRNAs, forming tRNA-cmnm(5)s(2)U34. The protein is tRNA uridine 5-carboxymethylaminomethyl modification enzyme MnmG of Bacillus mycoides (strain KBAB4) (Bacillus weihenstephanensis).